The following is a 124-amino-acid chain: Large ribosomal subunit protein mL52 (124 aa).

A mitochondrion-targeting transit peptide spans 1–23 (MAALGMLLSTGVRRLHCGSAARA). The tract at residues 99-124 (LQEEKRKQQNALKPKGVLLQNPGPSQ) is disordered.

The protein belongs to the mitochondrion-specific ribosomal protein mL52 family. In terms of assembly, component of the mitochondrial ribosome large subunit (39S) which comprises a 16S rRNA and about 50 distinct proteins.

It is found in the mitochondrion. The protein is Large ribosomal subunit protein mL52 (MRPL52) of Bos taurus (Bovine).